The primary structure comprises 302 residues: Tetrahydromethanopterin S-methyltransferase subunit E (302 aa).

6 helical membrane-spanning segments follow: residues 3-23, 86-106, 132-152, 155-175, 233-253, and 259-279; these read PLIS…AGAS, PLFA…TFAV, ITPI…VSYL, VVLG…ITIG, PVTG…TTIF, and LGWL…IWNW.

This sequence belongs to the MtrE family. As to quaternary structure, the complex is composed of 8 subunits; MtrA, MtrB, MtrC, MtrD, MtrE, MtrF, MtrG and MtrH.

The protein localises to the cell membrane. It catalyses the reaction 5-methyl-5,6,7,8-tetrahydromethanopterin + coenzyme M + 2 Na(+)(in) = 5,6,7,8-tetrahydromethanopterin + methyl-coenzyme M + 2 Na(+)(out). It functions in the pathway one-carbon metabolism; methanogenesis from CO(2); methyl-coenzyme M from 5,10-methylene-5,6,7,8-tetrahydromethanopterin: step 2/2. Its function is as follows. Part of a complex that catalyzes the formation of methyl-coenzyme M and tetrahydromethanopterin from coenzyme M and methyl-tetrahydromethanopterin. This is an energy-conserving, sodium-ion translocating step. The chain is Tetrahydromethanopterin S-methyltransferase subunit E from Methanosarcina barkeri (strain Fusaro / DSM 804).